The sequence spans 473 residues: Photosystem II CP43 reaction center protein (473 aa).

The propeptide occupies 1–14 (MKILYSLRRYFHVE). The residue at position 15 (T15) is an N-acetylthreonine. At T15 the chain carries Phosphothreonine. 5 helical membrane-spanning segments follow: residues 69–93 (LFEV…PHLA), 134–155 (LIGP…KDKN), 178–200 (KAIW…RKIT), 255–275 (KPFA…LSYS), and 291–312 (WFNN…ASQA). A [CaMn4O5] cluster-binding site is contributed by E367. Residues 447-471 (RARAAAAGFEKGIDRDSEPVLYMEP) form a helical membrane-spanning segment.

It belongs to the PsbB/PsbC family. PsbC subfamily. In terms of assembly, PSII is composed of 1 copy each of membrane proteins PsbA, PsbB, PsbC, PsbD, PsbE, PsbF, PsbH, PsbI, PsbJ, PsbK, PsbL, PsbM, PsbT, PsbX, PsbY, PsbZ, Psb30/Ycf12, at least 3 peripheral proteins of the oxygen-evolving complex and a large number of cofactors. It forms dimeric complexes. Binds multiple chlorophylls and provides some of the ligands for the Ca-4Mn-5O cluster of the oxygen-evolving complex. It may also provide a ligand for a Cl- that is required for oxygen evolution. PSII binds additional chlorophylls, carotenoids and specific lipids. is required as a cofactor.

Its subcellular location is the plastid. It localises to the chloroplast thylakoid membrane. In terms of biological role, one of the components of the core complex of photosystem II (PSII). It binds chlorophyll and helps catalyze the primary light-induced photochemical processes of PSII. PSII is a light-driven water:plastoquinone oxidoreductase, using light energy to abstract electrons from H(2)O, generating O(2) and a proton gradient subsequently used for ATP formation. The chain is Photosystem II CP43 reaction center protein from Chara vulgaris (Common stonewort).